Reading from the N-terminus, the 116-residue chain is MTHYCGINRMKEGTDFEKKHTPFIECKDRVKANDYFEVKISTGIPHPMEDNHFIHWIELYMGDLYLARVDFTQFMKPEVKLMVKAPSKEHEKFILRALMRCNLHGVWEYEKEILLE.

Fe cation is bound by residues His20, His46, His52, Cys101, and His104.

This sequence belongs to the desulfoferrodoxin family. Requires Fe cation as cofactor.

It catalyses the reaction reduced [rubredoxin] + superoxide + 2 H(+) = oxidized [rubredoxin] + H2O2. In terms of biological role, uses electrons from reduced NADP, by way of rubredoxin and an oxidoreductase, to catalyze the reduction of superoxide to hydrogen peroxide. The protein is Putative superoxide reductase of Methanocaldococcus jannaschii (strain ATCC 43067 / DSM 2661 / JAL-1 / JCM 10045 / NBRC 100440) (Methanococcus jannaschii).